Reading from the N-terminus, the 511-residue chain is Cytochrome P450 monooxygenase prhD (511 aa).

N-linked (GlcNAc...) asparagine glycosylation occurs at Asn-7. Residues 10–30 (GNGMGLLIPLGLSWLIWTILL) form a helical membrane-spanning segment. Cys-444 is a heme binding site. The N-linked (GlcNAc...) asparagine glycan is linked to Asn-502.

This sequence belongs to the cytochrome P450 family. Heme is required as a cofactor.

It localises to the membrane. It participates in secondary metabolite biosynthesis; terpenoid biosynthesis. Cytochrome P450 monooxygenase; part of the gene cluster that mediates the biosynthesis of paraherquonin, a meroterpenoid with a unique, highly congested hexacyclic molecular architecture. The first step of the pathway is the synthesis of 3,5-dimethylorsellinic acid (DMOA) by the polyketide synthase prhL. Synthesis of DMOA is followed by farnesylation by the prenyltransferase prhE, methylesterification by the methyl-transferase prhM, epoxidation of the prenyl chain by the flavin-dependent monooxygenase prhF, and cyclization of the farnesyl moiety by the terpene cyclase prhH, to yield the tetracyclic intermediate, protoaustinoid A. The short chain dehydrogenase prhI then oxidizes the C-3 alcohol group of the terpene cyclase product to transform protoaustinoid A into protoaustinoid B. The FAD-binding monooxygenase prhJ catalyzes the oxidation of protoaustinoid B into preaustinoid A which is further oxidized into preaustinoid A1 by FAD-binding monooxygenase phrK. Finally, prhA leads to berkeleydione via the berkeleyone B intermediate. PrhA is a multifunctional dioxygenase that first desaturates at C5-C6 to form berkeleyone B, followed by rearrangement of the A/B-ring to form the cycloheptadiene moiety in berkeleydione. Berkeleydione serves as the key intermediate for the biosynthesis of paraherquonin as well as many other meroterpenoids. The cytochrome P450 monooxygenases prhB, prhD, and prhN, as well as the isomerase prhC, are probably involved in the late stage of paraherquonin biosynthesis, after the production of berkeleydione. Especially prhC might be a multifunctional enzyme that catalyzes the D-ring expansion via intramolecular methoxy rearrangement, as well as the hydrolysis of the expanded D-ring. The protein is Cytochrome P450 monooxygenase prhD of Penicillium brasilianum.